A 256-amino-acid polypeptide reads, in one-letter code: 1-(5-phosphoribosyl)-5-[(5-phosphoribosylamino)methylideneamino] imidazole-4-carboxamide isomerase (256 aa).

The active-site Proton acceptor is the Asp-8. The Proton donor role is filled by Asp-129.

This sequence belongs to the HisA/HisF family.

It is found in the cytoplasm. It carries out the reaction 1-(5-phospho-beta-D-ribosyl)-5-[(5-phospho-beta-D-ribosylamino)methylideneamino]imidazole-4-carboxamide = 5-[(5-phospho-1-deoxy-D-ribulos-1-ylimino)methylamino]-1-(5-phospho-beta-D-ribosyl)imidazole-4-carboxamide. It functions in the pathway amino-acid biosynthesis; L-histidine biosynthesis; L-histidine from 5-phospho-alpha-D-ribose 1-diphosphate: step 4/9. The protein is 1-(5-phosphoribosyl)-5-[(5-phosphoribosylamino)methylideneamino] imidazole-4-carboxamide isomerase of Synechococcus sp. (strain WH7803).